We begin with the raw amino-acid sequence, 443 residues long: Glutamyl-tRNA reductase (443 aa).

Substrate-binding positions include 49–52, S109, 114–116, and Q120; these read TCNR and ETQ. C50 (nucleophile) is an active-site residue. 189–194 is an NADP(+) binding site; it reads GAGKMS.

It belongs to the glutamyl-tRNA reductase family. As to quaternary structure, homodimer.

The catalysed reaction is (S)-4-amino-5-oxopentanoate + tRNA(Glu) + NADP(+) = L-glutamyl-tRNA(Glu) + NADPH + H(+). The protein operates within porphyrin-containing compound metabolism; protoporphyrin-IX biosynthesis; 5-aminolevulinate from L-glutamyl-tRNA(Glu): step 1/2. Catalyzes the NADPH-dependent reduction of glutamyl-tRNA(Glu) to glutamate 1-semialdehyde (GSA). This is Glutamyl-tRNA reductase from Heliobacterium mobile (Heliobacillus mobilis).